The chain runs to 346 residues: Protein FAF1 (346 aa).

2 disordered regions span residues 22 to 120 and 323 to 346; these read QFGS…LRSG and KRDI…KSRR. Basic and acidic residues predominate over residues 31–65; that stretch reads FEDKTKNIRTEVDTRDSSGDEIDNSDHGSDFKDGT. A compositionally biased stretch (acidic residues) spans 72-85; it reads SDEDSGNETAEENN.

As to quaternary structure, interacts with KRR1.

It is found in the nucleus. The protein resides in the nucleolus. Its function is as follows. Required for pre-rRNA processing and 40S ribosomal subunit assembly. Seems to act in the processing of 35S rRNA at the A(0), A(1), and A(2) cleavage sites. The polypeptide is Protein FAF1 (FAF1) (Saccharomyces cerevisiae (strain ATCC 204508 / S288c) (Baker's yeast)).